The primary structure comprises 296 residues: 4-amino-4-deoxyprephenate dehydrogenase (296 aa).

The region spanning 9 to 288 (RCVVVGGAGA…EHGAELERLC (280 aa)) is the Prephenate/arogenate dehydrogenase domain.

It belongs to the prephenate/arogenate dehydrogenase family.

It carries out the reaction 4-amino-4-deoxyprephenate + NAD(+) = 3-(4-aminophenyl)pyruvate + CO2 + NADH + H(+). Its pathway is antibiotic biosynthesis. Its function is as follows. Involved in pristinamycin I biosynthesis. Probably catalyzes the formation of 3-(4-aminophenyl)pyruvate from 4-amino-4-deoxyprephenate. In Streptomyces pristinaespiralis, this protein is 4-amino-4-deoxyprephenate dehydrogenase.